A 235-amino-acid polypeptide reads, in one-letter code: Probable tetraspanin tspA (235 aa).

At 1–18 the chain is on the cytoplasmic side; that stretch reads MVDTSNLLPQTPRLLKVP. The helical transmembrane segment at 19-39 threads the bilayer; it reads LIILNIILWILGLVLVIVGGI. At 40 to 68 the chain is on the extracellular side; sequence CVSFLSNFKDFTKASDAKSALSNLTTSIP. An N-linked (GlcNAc...) asparagine glycan is attached at Asn62. Residues 69 to 89 traverse the membrane as a helical segment; it reads AGVLVIGILFVIFTVVGCFVA. Topologically, residues 90–93 are cytoplasmic; the sequence is YKEK. Residues 94 to 114 form a helical membrane-spanning segment; the sequence is LVGLVIYCAVMLILLVILIGV. The Extracellular portion of the chain corresponds to 115–200; sequence GGKAITLHND…FSSKIYAVGA (86 aa). N-linked (GlcNAc...) asparagine glycans are attached at residues Asn139, Asn143, and Asn160. Residues 201–221 traverse the membrane as a helical segment; sequence AGLAIGIIELVAILFSLFLII. Topologically, residues 222-235 are cytoplasmic; the sequence is RICRSPRTRSYDQY.

The protein belongs to the tetraspanin (TM4SF) family.

It is found in the membrane. The chain is Probable tetraspanin tspA (tspA) from Dictyostelium discoideum (Social amoeba).